A 487-amino-acid chain; its full sequence is 26S proteasome non-ATPase regulatory subunit 3 homolog B (487 aa).

Residues 1–21 form a disordered region; it reads MTQDVEMKDNQTPTQSVVSAP. The span at 10–21 shows a compositional bias: polar residues; that stretch reads NQTPTQSVVSAP. Residues 239–420 form the PCI domain; the sequence is CRYLFYLGKI…GCMVSKETGD (182 aa). The segment at 452 to 487 is disordered; the sequence is PPNTHREKESEEKRREMKQQEEELAKYMAEEDDDDF. Basic and acidic residues predominate over residues 455–480; sequence THREKESEEKRREMKQQEEELAKYMA.

The protein belongs to the proteasome subunit S3 family. As to quaternary structure, component of the 19S regulatory particle (RP/PA700) lid subcomplex of the 26S proteasome. The 26S proteasome is composed of a core protease (CP), known as the 20S proteasome, capped at one or both ends by the 19S regulatory particle (RP/PA700). The RP/PA700 complex is composed of at least 17 different subunits in two subcomplexes, the base and the lid, which form the portions proximal and distal to the 20S proteolytic core, respectively. Interacts with UCH1 and UCH2. As to expression, preferentially expressed in flowers.

Functionally, acts as a regulatory subunit of the 26 proteasome which is involved in the ATP-dependent degradation of ubiquitinated proteins. The protein is 26S proteasome non-ATPase regulatory subunit 3 homolog B of Arabidopsis thaliana (Mouse-ear cress).